We begin with the raw amino-acid sequence, 311 residues long: Peptide methionine sulfoxide reductase MsrA/MsrB (311 aa).

A peptide methionine sulfoxide reductase A region spans residues 1–155 (MAEIYLAGGC…PGGYCHINVN (155 aa)). The active site involves cysteine 10. The MsrB domain occupies 172-295 (DAELKEQLTQ…NSAALRFIPK (124 aa)). The Nucleophile role is filled by cysteine 284.

This sequence in the N-terminal section; belongs to the MsrA Met sulfoxide reductase family. The protein in the C-terminal section; belongs to the MsrB Met sulfoxide reductase family.

The catalysed reaction is L-methionyl-[protein] + [thioredoxin]-disulfide + H2O = L-methionyl-(S)-S-oxide-[protein] + [thioredoxin]-dithiol. The enzyme catalyses [thioredoxin]-disulfide + L-methionine + H2O = L-methionine (S)-S-oxide + [thioredoxin]-dithiol. It carries out the reaction L-methionyl-[protein] + [thioredoxin]-disulfide + H2O = L-methionyl-(R)-S-oxide-[protein] + [thioredoxin]-dithiol. Has an important function as a repair enzyme for proteins that have been inactivated by oxidation. Catalyzes the reversible oxidation-reduction of methionine sulfoxide in proteins to methionine. Involved in protection against oxidative stress when the bacterium enters the host bloodstream and required for maximal growth under aerobic and anaerobic conditions. The polypeptide is Peptide methionine sulfoxide reductase MsrA/MsrB (msrAB) (Streptococcus gordonii (strain Challis / ATCC 35105 / BCRC 15272 / CH1 / DL1 / V288)).